Reading from the N-terminus, the 339-residue chain is Phenylalanine--tRNA ligase alpha subunit (339 aa).

Glutamate 254 provides a ligand contact to Mg(2+).

It belongs to the class-II aminoacyl-tRNA synthetase family. Phe-tRNA synthetase alpha subunit type 1 subfamily. As to quaternary structure, tetramer of two alpha and two beta subunits. It depends on Mg(2+) as a cofactor.

The protein localises to the cytoplasm. The enzyme catalyses tRNA(Phe) + L-phenylalanine + ATP = L-phenylalanyl-tRNA(Phe) + AMP + diphosphate + H(+). The polypeptide is Phenylalanine--tRNA ligase alpha subunit (Caldanaerobacter subterraneus subsp. tengcongensis (strain DSM 15242 / JCM 11007 / NBRC 100824 / MB4) (Thermoanaerobacter tengcongensis)).